A 499-amino-acid polypeptide reads, in one-letter code: U4/U6 small nuclear ribonucleoprotein Prp31 (499 aa).

The tract at residues 1-43 (MSLADELLADLEEAAEEEEGGSYGEEEEEPAIEDVQEETQLDL) is disordered. Positions 7-40 (LLADLEEAAEEEEGGSYGEEEEEPAIEDVQEETQ) are enriched in acidic residues. 2 coiled-coil regions span residues 85–120 (EAAP…KYSK) and 181–215 (DEEL…MSFI). Residues 215-333 (IAPNLSIIIG…IERKFDKWQE (119 aa)) form the Nop domain. The segment at 334-357 (PPPVKQVKPLPAPLDGQRKKRGGR) is disordered. The Nuclear localization signal (NLS) signature appears at 351-364 (RKKRGGRRYRKMKE). A phosphoserine mark is found at serine 379, serine 395, and serine 432. At lysine 438 the chain carries N6-acetyllysine. Serine 439 carries the post-translational modification Phosphoserine. The residue at position 440 (threonine 440) is a Phosphothreonine. Serine 450 bears the Phosphoserine mark. A Phosphothreonine modification is found at threonine 455. Glycyl lysine isopeptide (Lys-Gly) (interchain with G-Cter in SUMO2) cross-links involve residues lysine 471 and lysine 478.

This sequence belongs to the PRP31 family. In terms of assembly, identified in the spliceosome B complex. Component of the U4/U6-U5 tri-snRNP complex composed of the U4, U6 and U5 snRNAs and at least PRPF3, PRPF4, PRPF6, PRPF8, PRPF31, SNRNP200, TXNL4A, SNRNP40, DDX23, CD2BP2, PPIH, SNU13, EFTUD2, SART1 and USP39. Interacts with a complex formed by SNU13 and U4 snRNA, but not with SNU13 or U4 snRNA alone. The complex formed by SNU13 and PRPF31 also binds U4atac snRNA, a characteristic component of specific, less abundant spliceosomal complexes. Interacts with PRPF6/U5 snRNP-associated 102 kDa protein. Component of some MLL1/MLL complex, at least composed of the core components KMT2A/MLL1, ASH2L, HCFC1/HCF1, WDR5 and RBBP5, as well as the facultative components BACC1, CHD8, E2F6, HSP70, INO80C, KANSL1, LAS1L, MAX, MCRS1, MGA, KAT8/MOF, PELP1, PHF20, PRP31, RING2, RUVB1/TIP49A, RUVB2/TIP49B, SENP3, TAF1, TAF4, TAF6, TAF7, TAF9 and TEX10. Interacts (via its NLS) with CTNNBL1. Interacts with USH1G. Phosphorylated by PRP4K during spliceosome assembly.

The protein localises to the nucleus. It is found in the nucleus speckle. The protein resides in the cajal body. Involved in pre-mRNA splicing as component of the spliceosome. Required for the assembly of the U4/U5/U6 tri-snRNP complex, one of the building blocks of the spliceosome. The protein is U4/U6 small nuclear ribonucleoprotein Prp31 (Prpf31) of Mus musculus (Mouse).